Consider the following 867-residue polypeptide: Alanine--tRNA ligase (867 aa).

Zn(2+) is bound by residues H559, H563, C661, and H665.

The protein belongs to the class-II aminoacyl-tRNA synthetase family. It depends on Zn(2+) as a cofactor.

It is found in the cytoplasm. The catalysed reaction is tRNA(Ala) + L-alanine + ATP = L-alanyl-tRNA(Ala) + AMP + diphosphate. Functionally, catalyzes the attachment of alanine to tRNA(Ala) in a two-step reaction: alanine is first activated by ATP to form Ala-AMP and then transferred to the acceptor end of tRNA(Ala). Also edits incorrectly charged Ser-tRNA(Ala) and Gly-tRNA(Ala) via its editing domain. The sequence is that of Alanine--tRNA ligase from Aquifex aeolicus (strain VF5).